The following is a 593-amino-acid chain: DNA mismatch repair protein MutL (593 aa).

Belongs to the DNA mismatch repair MutL/HexB family.

Its function is as follows. This protein is involved in the repair of mismatches in DNA. It is required for dam-dependent methyl-directed DNA mismatch repair. May act as a 'molecular matchmaker', a protein that promotes the formation of a stable complex between two or more DNA-binding proteins in an ATP-dependent manner without itself being part of a final effector complex. The chain is DNA mismatch repair protein MutL from Leptospira interrogans serogroup Icterohaemorrhagiae serovar copenhageni (strain Fiocruz L1-130).